The chain runs to 402 residues: Acetate kinase (402 aa).

Asn7 is a Mg(2+) binding site. An ATP-binding site is contributed by Lys14. Arg95 is a substrate binding site. The active-site Proton donor/acceptor is the Asp152. Residues 212–216 (HLGNG), 286–288 (DMR), and 334–338 (GIGEN) contribute to the ATP site. Residue Glu388 coordinates Mg(2+).

It belongs to the acetokinase family. In terms of assembly, homodimer. The cofactor is Mg(2+). It depends on Mn(2+) as a cofactor.

It localises to the cytoplasm. It carries out the reaction acetate + ATP = acetyl phosphate + ADP. It functions in the pathway metabolic intermediate biosynthesis; acetyl-CoA biosynthesis; acetyl-CoA from acetate: step 1/2. Functionally, catalyzes the formation of acetyl phosphate from acetate and ATP. Can also catalyze the reverse reaction. The chain is Acetate kinase from Oleidesulfovibrio alaskensis (strain ATCC BAA-1058 / DSM 17464 / G20) (Desulfovibrio alaskensis).